The sequence spans 154 residues: Neurotrophin-3 (154 aa).

The signal sequence occupies residues 1–18 (MSILFYVMFLAYLRGVQG). Residues 19 to 134 (NSMDQRSLPE…VNSRSPRRKR (116 aa)) constitute a propeptide that is removed on maturation.

It belongs to the NGF-beta family.

Its subcellular location is the secreted. Seems to promote the survival of visceral and proprioceptive sensory neurons. The chain is Neurotrophin-3 (NTF3) from Cervus elaphus (Red deer).